The primary structure comprises 337 residues: Ketol-acid reductoisomerase (NADP(+)) (337 aa).

The region spanning 3–183 is the KARI N-terminal Rossmann domain; the sequence is VEVFYDDDAD…GGTRAGAIRT (181 aa). NADP(+)-binding positions include 26–29, serine 52, serine 54, and 84–87; these read YGSQ and DTAQ. Histidine 109 is a catalytic residue. Residue glycine 135 participates in NADP(+) binding. The KARI C-terminal knotted domain occupies 184–329; sequence TFTEETETDL…SKLRGMMSWV (146 aa). Positions 192, 196, 228, and 232 each coordinate Mg(2+). Residue serine 253 participates in substrate binding.

It belongs to the ketol-acid reductoisomerase family. Mg(2+) is required as a cofactor.

It carries out the reaction (2R)-2,3-dihydroxy-3-methylbutanoate + NADP(+) = (2S)-2-acetolactate + NADPH + H(+). The catalysed reaction is (2R,3R)-2,3-dihydroxy-3-methylpentanoate + NADP(+) = (S)-2-ethyl-2-hydroxy-3-oxobutanoate + NADPH + H(+). It participates in amino-acid biosynthesis; L-isoleucine biosynthesis; L-isoleucine from 2-oxobutanoate: step 2/4. Its pathway is amino-acid biosynthesis; L-valine biosynthesis; L-valine from pyruvate: step 2/4. Involved in the biosynthesis of branched-chain amino acids (BCAA). Catalyzes an alkyl-migration followed by a ketol-acid reduction of (S)-2-acetolactate (S2AL) to yield (R)-2,3-dihydroxy-isovalerate. In the isomerase reaction, S2AL is rearranged via a Mg-dependent methyl migration to produce 3-hydroxy-3-methyl-2-ketobutyrate (HMKB). In the reductase reaction, this 2-ketoacid undergoes a metal-dependent reduction by NADPH to yield (R)-2,3-dihydroxy-isovalerate. This chain is Ketol-acid reductoisomerase (NADP(+)), found in Salinispora arenicola (strain CNS-205).